The primary structure comprises 247 residues: Protein NipSnap homolog 3B (247 aa).

K45 and K57 each carry N6-succinyllysine.

This sequence belongs to the NipSnap family.

The polypeptide is Protein NipSnap homolog 3B (NIPSNAP3B) (Homo sapiens (Human)).